The following is a 350-amino-acid chain: D-alanine--D-alanine ligase (350 aa).

Positions 133–334 (NDIFELNKIP…VSEVFDNLIG (202 aa)) constitute an ATP-grasp domain. 161 to 216 (FEKTSKAVYVKPCNAGSSVGVMRAETEEELEKAIQNAFQYDRRILVEEEIIGPELQ) provides a ligand contact to ATP. Asp-288, Glu-300, and Asn-302 together coordinate Mg(2+).

This sequence belongs to the D-alanine--D-alanine ligase family. Mg(2+) is required as a cofactor. The cofactor is Mn(2+).

Its subcellular location is the cytoplasm. The catalysed reaction is 2 D-alanine + ATP = D-alanyl-D-alanine + ADP + phosphate + H(+). It participates in cell wall biogenesis; peptidoglycan biosynthesis. In terms of biological role, cell wall formation. The chain is D-alanine--D-alanine ligase from Finegoldia magna (strain ATCC 29328 / DSM 20472 / WAL 2508) (Peptostreptococcus magnus).